Reading from the N-terminus, the 273-residue chain is Ribosomal RNA small subunit methyltransferase I (273 aa).

The protein belongs to the methyltransferase superfamily. RsmI family.

It is found in the cytoplasm. The enzyme catalyses cytidine(1402) in 16S rRNA + S-adenosyl-L-methionine = 2'-O-methylcytidine(1402) in 16S rRNA + S-adenosyl-L-homocysteine + H(+). In terms of biological role, catalyzes the 2'-O-methylation of the ribose of cytidine 1402 (C1402) in 16S rRNA. This is Ribosomal RNA small subunit methyltransferase I from Xylella fastidiosa (strain Temecula1 / ATCC 700964).